A 554-amino-acid chain; its full sequence is MASQVSQMPSSSPLSSNKDEMRPKADFQPSIWGDLFLNCPDKNIDAETEKRHQQLKEEVRKMIVAPMANSTQKLAFIDSVQRLGVSYHFTKEIEDELENIYHNNNDAENDLYTTSIRFRLLREHGYNVSCDVFNKFKDEQGNFKSSVTSDVRGLLELYQASYLRVHGEDILDEAISFTTHHLSLAVASLDHPLSEEVSHALKQSIRRGLPRVEARHYLSVYQDIESHNKALLEFAKIDFNMLQFLHRKELSEICRWWKDLDFQRKLPYARDRVVEGYFWISGVYFEPQYSLGRKMLTKVIAMASIVDDTYDSYATYEELIPYTNAIERWDIKCIDEIPEYMKPSYKALLDVYEEMVQLVAEHGRQYRVEYAKNAMIRLAQSYLVEAKWTLQNYKPSFEEFKANALPTCGYAMLAITSFVGMGDIVTPETFKWAASDPKIIQASTIICRFMDDVAEHKFKHRREDDCSAIECYMEEYGVTAQEAYDVFNKHVESAWKDLNQEFLKPTEMPTEVLNRSLNLARVMDVLYREGDGYTYVGKAAKGGITSLLIEPIAL.

The span at 1–16 shows a compositional bias: low complexity; it reads MASQVSQMPSSSPLSS. Residues 1-23 form a disordered region; that stretch reads MASQVSQMPSSSPLSSNKDEMRP. Residues D307, D311, D451, and E455 each coordinate Mg(2+). The DDXXD motif signature appears at 307 to 311; that stretch reads DDTYD.

It belongs to the terpene synthase family. Mg(2+) is required as a cofactor.

The enzyme catalyses (2E,6E)-farnesyl diphosphate = (1S,8aR)-delta-cadinene + diphosphate. It functions in the pathway secondary metabolite biosynthesis; terpenoid biosynthesis. Its function is as follows. Responsible for the cyclization of trans,trans-farnesyl diphosphate (FPP) to (+)-delta cadinene. This chain is (+)-delta-cadinene synthase isozyme XC1, found in Gossypium arboreum (Tree cotton).